The chain runs to 246 residues: Purine nucleoside phosphorylase Cgl2154/cg2365 (246 aa).

Residues His-68, Cys-107, and His-124 each coordinate Zn(2+).

Belongs to the purine nucleoside phosphorylase YfiH/LACC1 family. Homodimer. Cu(2+) is required as a cofactor. The cofactor is Zn(2+).

It catalyses the reaction adenosine + phosphate = alpha-D-ribose 1-phosphate + adenine. The catalysed reaction is S-methyl-5'-thioadenosine + phosphate = 5-(methylsulfanyl)-alpha-D-ribose 1-phosphate + adenine. It carries out the reaction inosine + phosphate = alpha-D-ribose 1-phosphate + hypoxanthine. The enzyme catalyses adenosine + H2O + H(+) = inosine + NH4(+). Its function is as follows. Purine nucleoside enzyme that catalyzes the phosphorolysis of adenosine and inosine nucleosides, yielding D-ribose 1-phosphate and the respective free bases, adenine and hypoxanthine. Also catalyzes the phosphorolysis of S-methyl-5'-thioadenosine into adenine and S-methyl-5-thio-alpha-D-ribose 1-phosphate. Also has adenosine deaminase activity. This Corynebacterium glutamicum (strain ATCC 13032 / DSM 20300 / JCM 1318 / BCRC 11384 / CCUG 27702 / LMG 3730 / NBRC 12168 / NCIMB 10025 / NRRL B-2784 / 534) protein is Purine nucleoside phosphorylase Cgl2154/cg2365.